The chain runs to 454 residues: Notoamide biosynthesis cluster protein M' (454 aa).

2 N-linked (GlcNAc...) asparagine glycosylation sites follow: asparagine 51 and asparagine 74. The span at lysine 205–lysine 219 shows a compositional bias: basic residues. The interval lysine 205–histidine 224 is disordered. The next 2 membrane-spanning stretches (helical) occupy residues methionine 334–phenylalanine 354 and phenylalanine 375–valine 395.

The protein localises to the membrane. In terms of biological role, part of the gene cluster that mediates the biosynthesis of notoamide, a fungal indole alkaloid that belongs to a family of natural products containing a characteristic bicyclo[2.2.2]diazaoctane core. The first step of notoamide biosynthesis involves coupling of L-proline and L-tryptophan by the bimodular NRPS notE', to produce cyclo-L-tryptophan-L-proline called brevianamide F. The reverse prenyltransferase notF' then acts as a deoxybrevianamide E synthase and converts brevianamide F to deoxybrevianamide E via reverse prenylation at C-2 of the indole ring leading to the bicyclo[2.2.2]diazaoctane core. Deoxybrevianamide E is further hydroxylated at C-6 of the indole ring, likely catalyzed by the cytochrome P450 monooxygenase notG', to yield 6-hydroxy-deoxybrevianamide E. 6-hydroxy-deoxybrevianamide E is a specific substrate of the prenyltransferase notC' for normal prenylation at C-7 to produce 6-hydroxy-7-prenyl-deoxybrevianamide, also called notoamide S. As the proposed pivotal branching point in notoamide biosynthesis, notoamide S can be diverted to notoamide E through an oxidative pyran ring closure putatively catalyzed by either notH' cytochrome P450 monooxygenase or the notD' FAD-linked oxidoreductase. This step would be followed by an indole 2,3-epoxidation-initiated pinacol-like rearrangement catalyzed by the notB' FAD-dependent monooxygenase leading to the formation of notoamide C and notoamide D. On the other hand notoamide S is converted to notoamide T by notH' (or notD'), a bifunctional oxidase that also functions as the intramolecular Diels-Alderase responsible for generation of (-)-notoamide T. To generate antipodal (+)-notoaminide T, notH (or notD) in Aspergillus strain MF297-2 is expected to catalyze a Diels-Alder reaction leading to the opposite stereochemistry. The remaining oxidoreductase notD' (or notH') likely catalyzes the oxidative pyran ring formation to yield (-)-stephacidin A. The FAD-dependent monooxygenase notI' is highly similar to notB' and is predicted to catalyze a similar conversion from (-)-stephacidin A to (+)-notoamide B via the 2,3-epoxidation of (-)-stephacidin A followed by a pinacol-type rearrangement. Finally, it remains unclear which enzyme could be responsible for the final hydroxylation steps leading to notoamide A and sclerotiamide. The function of notM' in the notoamide biosynthesis has not been determined yet. The polypeptide is Notoamide biosynthesis cluster protein M' (Aspergillus versicolor).